Reading from the N-terminus, the 344-residue chain is Phosphate acyltransferase (344 aa).

This sequence belongs to the PlsX family. Homodimer. Probably interacts with PlsY.

It is found in the cytoplasm. The catalysed reaction is a fatty acyl-[ACP] + phosphate = an acyl phosphate + holo-[ACP]. The protein operates within lipid metabolism; phospholipid metabolism. In terms of biological role, catalyzes the reversible formation of acyl-phosphate (acyl-PO(4)) from acyl-[acyl-carrier-protein] (acyl-ACP). This enzyme utilizes acyl-ACP as fatty acyl donor, but not acyl-CoA. This Yersinia enterocolitica serotype O:8 / biotype 1B (strain NCTC 13174 / 8081) protein is Phosphate acyltransferase.